Consider the following 293-residue polypeptide: Ribosomal protein L11 methyltransferase (293 aa).

The S-adenosyl-L-methionine site is built by threonine 145, glycine 166, aspartate 188, and asparagine 230.

It belongs to the methyltransferase superfamily. PrmA family.

It is found in the cytoplasm. It catalyses the reaction L-lysyl-[protein] + 3 S-adenosyl-L-methionine = N(6),N(6),N(6)-trimethyl-L-lysyl-[protein] + 3 S-adenosyl-L-homocysteine + 3 H(+). Functionally, methylates ribosomal protein L11. The protein is Ribosomal protein L11 methyltransferase of Shewanella pealeana (strain ATCC 700345 / ANG-SQ1).